The following is a 344-amino-acid chain: Arginine N-succinyltransferase (344 aa).

Leu125 provides a ligand contact to succinyl-CoA. His229 acts as the Proton donor in catalysis.

The protein belongs to the arginine N-succinyltransferase family.

The catalysed reaction is succinyl-CoA + L-arginine = N(2)-succinyl-L-arginine + CoA + H(+). It participates in amino-acid degradation; L-arginine degradation via AST pathway; L-glutamate and succinate from L-arginine: step 1/5. Its function is as follows. Catalyzes the transfer of succinyl-CoA to arginine to produce N(2)-succinylarginine. This chain is Arginine N-succinyltransferase, found in Escherichia coli (strain 55989 / EAEC).